The primary structure comprises 183 residues: Adenine phosphoribosyltransferase (183 aa).

This sequence belongs to the purine/pyrimidine phosphoribosyltransferase family. In terms of assembly, homodimer.

The protein resides in the cytoplasm. It carries out the reaction AMP + diphosphate = 5-phospho-alpha-D-ribose 1-diphosphate + adenine. The protein operates within purine metabolism; AMP biosynthesis via salvage pathway; AMP from adenine: step 1/1. In terms of biological role, catalyzes a salvage reaction resulting in the formation of AMP, that is energically less costly than de novo synthesis. The chain is Adenine phosphoribosyltransferase from Shewanella sp. (strain ANA-3).